Reading from the N-terminus, the 427-residue chain is Dorsalin-1 (427 aa).

Positions M1–T20 are cleaved as a signal peptide. Residues R21–R318 constitute a propeptide that is removed on maturation. N-linked (GlcNAc...) asparagine glycosylation is found at N71, N136, N265, and N292. The tract at residues K288–G321 is disordered. Over residues A307–G321 the composition is skewed to basic residues. 3 disulfide bridges follow: C325-C391, C354-C424, and C358-C426.

The protein belongs to the TGF-beta family. Homodimer; disulfide-linked. As to expression, expressed selectively in the dorsal neural tube. Lower levels seen in kidney and myotomal cells.

It localises to the secreted. In terms of biological role, appears to regulate cell differentiation within the neural tube. May regulate the differentiation of cell types along the dorsoventral axis of the neural tube, acting in conjunction with distinct ventralizing signals from the notochord and floor plate. Controls the cell differentiation in the neural tube in several ways: (1) promotes the differentiation of cell types that derive from the dorsal neural tube. (2) ensures that the dorsal neural tube is refractory to ventralizing species from the notochord. (3) can diffuse and influence the fate of cells in more ventral regions of the neural tube. The sequence is that of Dorsalin-1 (DSL1) from Gallus gallus (Chicken).